A 176-amino-acid chain; its full sequence is Inorganic pyrophosphatase (176 aa).

K30, R44, and Y56 together coordinate substrate. Mg(2+) is bound by residues D66, D71, and D103. Residue Y142 participates in substrate binding.

The protein belongs to the PPase family. Homohexamer. The cofactor is Mg(2+).

The protein resides in the cytoplasm. It catalyses the reaction diphosphate + H2O = 2 phosphate + H(+). Functionally, catalyzes the hydrolysis of inorganic pyrophosphate (PPi) forming two phosphate ions. This chain is Inorganic pyrophosphatase, found in Vibrio vulnificus (strain CMCP6).